Reading from the N-terminus, the 162-residue chain is Large ribosomal subunit protein uL10 (162 aa).

This sequence belongs to the universal ribosomal protein uL10 family. In terms of assembly, part of the ribosomal stalk of the 50S ribosomal subunit. The N-terminus interacts with L11 and the large rRNA to form the base of the stalk. The C-terminus forms an elongated spine to which L12 dimers bind in a sequential fashion forming a multimeric L10(L12)X complex.

Its function is as follows. Forms part of the ribosomal stalk, playing a central role in the interaction of the ribosome with GTP-bound translation factors. This chain is Large ribosomal subunit protein uL10 (rplJ), found in Mycoplasma genitalium (strain ATCC 33530 / DSM 19775 / NCTC 10195 / G37) (Mycoplasmoides genitalium).